Here is a 258-residue protein sequence, read N- to C-terminus: Imidazole glycerol phosphate synthase subunit HisF (258 aa).

Active-site residues include aspartate 11 and aspartate 130.

It belongs to the HisA/HisF family. In terms of assembly, heterodimer of HisH and HisF.

Its subcellular location is the cytoplasm. The enzyme catalyses 5-[(5-phospho-1-deoxy-D-ribulos-1-ylimino)methylamino]-1-(5-phospho-beta-D-ribosyl)imidazole-4-carboxamide + L-glutamine = D-erythro-1-(imidazol-4-yl)glycerol 3-phosphate + 5-amino-1-(5-phospho-beta-D-ribosyl)imidazole-4-carboxamide + L-glutamate + H(+). The protein operates within amino-acid biosynthesis; L-histidine biosynthesis; L-histidine from 5-phospho-alpha-D-ribose 1-diphosphate: step 5/9. Functionally, IGPS catalyzes the conversion of PRFAR and glutamine to IGP, AICAR and glutamate. The HisF subunit catalyzes the cyclization activity that produces IGP and AICAR from PRFAR using the ammonia provided by the HisH subunit. This chain is Imidazole glycerol phosphate synthase subunit HisF, found in Roseiflexus sp. (strain RS-1).